A 297-amino-acid chain; its full sequence is tRNA (guanine-N(7)-)-methyltransferase (297 aa).

Residues glycine 101, 124–125 (EI), 171–172 (NT), and cysteine 191 contribute to the S-adenosyl-L-methionine site. Aspartate 194 is an active-site residue. 270 to 272 (TEE) contacts S-adenosyl-L-methionine.

Belongs to the class I-like SAM-binding methyltransferase superfamily. TrmB family. Forms a complex with trm82.

Its subcellular location is the nucleus. The enzyme catalyses guanosine(46) in tRNA + S-adenosyl-L-methionine = N(7)-methylguanosine(46) in tRNA + S-adenosyl-L-homocysteine. Its pathway is tRNA modification; N(7)-methylguanine-tRNA biosynthesis. Catalyzes the formation of N(7)-methylguanine at position 46 (m7G46) in tRNA. The chain is tRNA (guanine-N(7)-)-methyltransferase (trm8) from Aspergillus niger (strain ATCC MYA-4892 / CBS 513.88 / FGSC A1513).